The primary structure comprises 193 residues: Thymidine kinase (193 aa).

Residues 9 to 16 and 87 to 90 contribute to the ATP site; these read SAMNAGKS and DEAQ. Glutamate 88 (proton acceptor) is an active-site residue. Residues cysteine 145, cysteine 147, cysteine 182, and histidine 185 each coordinate Zn(2+).

This sequence belongs to the thymidine kinase family. In terms of assembly, homotetramer.

Its subcellular location is the cytoplasm. It carries out the reaction thymidine + ATP = dTMP + ADP + H(+). The polypeptide is Thymidine kinase (Idiomarina loihiensis (strain ATCC BAA-735 / DSM 15497 / L2-TR)).